Here is a 227-residue protein sequence, read N- to C-terminus: Probable maleylacetoacetate isomerase 2 (227 aa).

A GST N-terminal domain is found at 14–97; it reads IQPILYSYWR…YLEETRPQRP (84 aa). Residues 24–29, Gln55, Val69, 81–82, Gln121, and 125–127 each bind glutathione; these read SSCSWR, ES, and NLI. Positions 102-222 constitute a GST C-terminal domain; it reads DVHKRAKVRE…HPSNQPDCPP (121 aa).

The protein belongs to the GST superfamily. Zeta family. The cofactor is glutathione.

Its subcellular location is the cytoplasm. The enzyme catalyses 4-maleylacetoacetate = 4-fumarylacetoacetate. It catalyses the reaction RX + glutathione = an S-substituted glutathione + a halide anion + H(+). The protein operates within amino-acid degradation; L-phenylalanine degradation; acetoacetate and fumarate from L-phenylalanine: step 5/6. Catalyzes the glutathione dependent oxygenation of dichloroacetic acid to glyoxylic acid in vitro. Has no glutathione thioltransferase activity with 4-hydroxynonenal (4-HNE), adrenochrome, phenethyl isothiocyanate (PEITC), 5-hydroperoxyeicosatetraenoic acid ((5S)-HpETE), prostaglandin A2 (PGA2) or 2-hydroxyethyldisulfide (HED). The sequence is that of Probable maleylacetoacetate isomerase 2 (GstZ2) from Drosophila melanogaster (Fruit fly).